Consider the following 600-residue polypeptide: Proline--tRNA ligase (600 aa).

This sequence belongs to the class-II aminoacyl-tRNA synthetase family. ProS type 1 subfamily. In terms of assembly, homodimer.

It localises to the cytoplasm. The enzyme catalyses tRNA(Pro) + L-proline + ATP = L-prolyl-tRNA(Pro) + AMP + diphosphate. Catalyzes the attachment of proline to tRNA(Pro) in a two-step reaction: proline is first activated by ATP to form Pro-AMP and then transferred to the acceptor end of tRNA(Pro). As ProRS can inadvertently accommodate and process non-cognate amino acids such as alanine and cysteine, to avoid such errors it has two additional distinct editing activities against alanine. One activity is designated as 'pretransfer' editing and involves the tRNA(Pro)-independent hydrolysis of activated Ala-AMP. The other activity is designated 'posttransfer' editing and involves deacylation of mischarged Ala-tRNA(Pro). The misacylated Cys-tRNA(Pro) is not edited by ProRS. The protein is Proline--tRNA ligase of Synechococcus elongatus (strain ATCC 33912 / PCC 7942 / FACHB-805) (Anacystis nidulans R2).